The following is a 291-amino-acid chain: Phosphoribosylaminoimidazole-succinocarboxamide synthase (291 aa).

This sequence belongs to the SAICAR synthetase family.

It catalyses the reaction 5-amino-1-(5-phospho-D-ribosyl)imidazole-4-carboxylate + L-aspartate + ATP = (2S)-2-[5-amino-1-(5-phospho-beta-D-ribosyl)imidazole-4-carboxamido]succinate + ADP + phosphate + 2 H(+). It participates in purine metabolism; IMP biosynthesis via de novo pathway; 5-amino-1-(5-phospho-D-ribosyl)imidazole-4-carboxamide from 5-amino-1-(5-phospho-D-ribosyl)imidazole-4-carboxylate: step 1/2. This Candida albicans (Yeast) protein is Phosphoribosylaminoimidazole-succinocarboxamide synthase (ADE1).